A 183-amino-acid polypeptide reads, in one-letter code: Glutathione-regulated potassium-efflux system ancillary protein KefG (183 aa).

This sequence belongs to the NAD(P)H dehydrogenase (quinone) family. KefG subfamily. As to quaternary structure, interacts with KefB.

Its subcellular location is the cell inner membrane. The enzyme catalyses a quinone + NADH + H(+) = a quinol + NAD(+). It catalyses the reaction a quinone + NADPH + H(+) = a quinol + NADP(+). Its function is as follows. Regulatory subunit of a potassium efflux system that confers protection against electrophiles. Required for full activity of KefB. The protein is Glutathione-regulated potassium-efflux system ancillary protein KefG of Pectobacterium carotovorum subsp. carotovorum (strain PC1).